Reading from the N-terminus, the 365-residue chain is Anthranilate phosphoribosyltransferase (365 aa).

5-phospho-alpha-D-ribose 1-diphosphate contacts are provided by residues G96, 99 to 100, T104, 106 to 109, 124 to 132, and S136; these read GD, NIST, and KHGNRSVSS. Residue G96 coordinates anthranilate. S108 contributes to the Mg(2+) binding site. N127 lines the anthranilate pocket. R182 lines the anthranilate pocket. Positions 240 and 241 each coordinate Mg(2+).

This sequence belongs to the anthranilate phosphoribosyltransferase family. Homodimer. The cofactor is Mg(2+).

It catalyses the reaction N-(5-phospho-beta-D-ribosyl)anthranilate + diphosphate = 5-phospho-alpha-D-ribose 1-diphosphate + anthranilate. The protein operates within amino-acid biosynthesis; L-tryptophan biosynthesis; L-tryptophan from chorismate: step 2/5. In terms of biological role, catalyzes the transfer of the phosphoribosyl group of 5-phosphorylribose-1-pyrophosphate (PRPP) to anthranilate to yield N-(5'-phosphoribosyl)-anthranilate (PRA). The sequence is that of Anthranilate phosphoribosyltransferase from Colwellia psychrerythraea (strain 34H / ATCC BAA-681) (Vibrio psychroerythus).